A 314-amino-acid chain; its full sequence is Homoserine O-acetyltransferase (314 aa).

Cysteine 142 (acyl-thioester intermediate) is an active-site residue. Substrate is bound by residues lysine 163 and serine 192. Catalysis depends on histidine 235, which acts as the Proton acceptor. Glutamate 237 is an active-site residue. Arginine 249 lines the substrate pocket.

This sequence belongs to the MetA family.

It localises to the cytoplasm. It catalyses the reaction L-homoserine + acetyl-CoA = O-acetyl-L-homoserine + CoA. Its pathway is amino-acid biosynthesis; L-methionine biosynthesis via de novo pathway; O-acetyl-L-homoserine from L-homoserine: step 1/1. Its function is as follows. Transfers an acetyl group from acetyl-CoA to L-homoserine, forming acetyl-L-homoserine. The sequence is that of Homoserine O-acetyltransferase from Desulfovibrio desulfuricans (strain ATCC 27774 / DSM 6949 / MB).